A 253-amino-acid polypeptide reads, in one-letter code: 5'-nucleotidase SurE (253 aa).

A divalent metal cation contacts are provided by aspartate 8, aspartate 9, serine 39, and asparagine 91.

This sequence belongs to the SurE nucleotidase family. A divalent metal cation serves as cofactor.

Its subcellular location is the cytoplasm. It catalyses the reaction a ribonucleoside 5'-phosphate + H2O = a ribonucleoside + phosphate. Its function is as follows. Nucleotidase that shows phosphatase activity on nucleoside 5'-monophosphates. The protein is 5'-nucleotidase SurE of Albidiferax ferrireducens (strain ATCC BAA-621 / DSM 15236 / T118) (Rhodoferax ferrireducens).